Here is an 865-residue protein sequence, read N- to C-terminus: Alanine--tRNA ligase (865 aa).

The Zn(2+) site is built by His552, His556, Cys654, and His658.

It belongs to the class-II aminoacyl-tRNA synthetase family. Zn(2+) is required as a cofactor.

The protein localises to the cytoplasm. The catalysed reaction is tRNA(Ala) + L-alanine + ATP = L-alanyl-tRNA(Ala) + AMP + diphosphate. Functionally, catalyzes the attachment of alanine to tRNA(Ala) in a two-step reaction: alanine is first activated by ATP to form Ala-AMP and then transferred to the acceptor end of tRNA(Ala). Also edits incorrectly charged Ser-tRNA(Ala) and Gly-tRNA(Ala) via its editing domain. This Coxiella burnetii (strain Dugway 5J108-111) protein is Alanine--tRNA ligase.